The primary structure comprises 147 residues: Hemoglobin subunit epsilon (147 aa).

Residues 3 to 147 enclose the Globin domain; it reads HFTAEEKAAV…VAIALAHKYH (145 aa). Residues serine 14 and serine 51 each carry the phosphoserine modification. Heme b contacts are provided by histidine 64 and histidine 93.

Belongs to the globin family. Heterotetramer of two alpha chains and two epsilon chains in early embryonic hemoglobin Gower-2; two zeta chains and two epsilon chains in early embryonic hemoglobin Gower-1. Red blood cells.

In terms of biological role, the epsilon chain is a beta-type chain of early mammalian embryonic hemoglobin. This Symphalangus syndactylus (Siamang) protein is Hemoglobin subunit epsilon (HBE1).